Consider the following 938-residue polypeptide: Ubiquitin carboxyl-terminal hydrolase Usp2 (938 aa).

Disordered regions lie at residues 1–53, 91–117, 130–254, 273–297, 360–410, and 500–610; these read MMLD…KVGA, KVKT…NTSR, FNGN…ISTT, EQNQ…HRYP, LSGQ…NLQQ, and KDAT…EKSE. The segment covering 22–36 has biased composition (low complexity); it reads STTKTSSVVATSASS. 4 stretches are compositionally biased toward low complexity: residues 137 to 158, 167 to 177, 198 to 227, and 275 to 289; these read TTTN…NTSN, STTATATSTST, MNGH…QRQQ, and NQVQ…PSSS. Residues 392 to 410 are compositionally biased toward polar residues; sequence ASRSNHGSQAGGSSSNLQQ. 2 stretches are compositionally biased toward low complexity: residues 502–555 and 574–583; these read ATTA…TARS and TSRSSIGTSS. Positions 592–610 are enriched in basic and acidic residues; sequence HNSDDGYKTASSSRDEKSE. The USP domain occupies 613-938; the sequence is CGLRNIGNTC…SAYILFYERT (326 aa). The active-site Nucleophile is Cys622. Zn(2+)-binding residues include Cys765, Cys768, Cys814, and Cys817. His895 (proton acceptor) is an active-site residue.

The protein belongs to the peptidase C19 family. In terms of assembly, interacts (via N-terminus) with imd (via N-terminus). Interacts with Rpt6.

The catalysed reaction is Thiol-dependent hydrolysis of ester, thioester, amide, peptide and isopeptide bonds formed by the C-terminal Gly of ubiquitin (a 76-residue protein attached to proteins as an intracellular targeting signal).. Its function is as follows. Hydrolase that deubiquitinates polyubiquitinated target proteins. Required for preventing the activation of the Toll signaling cascades under unchallenged conditions. Essential for bodily calcium homeostasis. Required for preventing the activation of the immune deficiency (Imd) signaling cascade under unchallenged conditions. Regulates the Imd pathway by specifically removing 'Lys-48'-linked ubiquitin from imd. Also promotes imd degradation probably by binding to imd and enhancing its association with the proteasome. In Drosophila melanogaster (Fruit fly), this protein is Ubiquitin carboxyl-terminal hydrolase Usp2.